The sequence spans 542 residues: Tubby-related protein 1 (542 aa).

Positions 1–289 are disordered; that stretch reads MPLRDETLRE…RAPSPPVEVD (289 aa). A compositionally biased stretch (basic and acidic residues) spans 91–104; it reads FLRDPEAKKRDPRE. The segment covering 114 to 132 has biased composition (acidic residues); that stretch reads AEDEEEEEEEDEEDEEEEA. The segment covering 146-157 has biased composition (basic and acidic residues); the sequence is PLREKSSADLKE. Positions 262–275 are enriched in basic residues; it reads SNQKGKAKGKGKKK.

The protein belongs to the TUB family. Homodimer. May interact with ABCF1, PSIP1, ZEB1 and HMGB2 (Potential). Interacts with DNM1. Interacts with F-actin. Interacts with TUB. Interacts with TYRO3. As to expression, retina-specific.

It is found in the cytoplasm. Its subcellular location is the cell membrane. The protein localises to the secreted. The protein resides in the synapse. In terms of biological role, required for normal development of photoreceptor synapses. Required for normal photoreceptor function and for long-term survival of photoreceptor cells. Interacts with cytoskeleton proteins and may play a role in protein transport in photoreceptor cells. Binds lipids, especially phosphatidylinositol 3-phosphate, phosphatidylinositol 4-phosphate, phosphatidylinositol 5-phosphate, phosphatidylinositol 3,4-bisphosphate, phosphatidylinositol 4,5-bisphosphate, phosphatidylinositol 3,4,5-bisphosphate, phosphatidylserine and phosphatidic acid (in vitro). Contribute to stimulation of phagocytosis of apoptotic retinal pigment epithelium (RPE) cells and macrophages. The protein is Tubby-related protein 1 (TULP1) of Homo sapiens (Human).